We begin with the raw amino-acid sequence, 315 residues long: Calumenin (315 aa).

Residues 1 to 19 (MDLRQFLMCLSLCTAFALS) form the signal peptide. Serine 44 is subject to Phosphoserine. At tyrosine 47 the chain carries Phosphotyrosine. Threonine 65 is modified (phosphothreonine). 6 EF-hand domains span residues 68–103 (ESKE…AQKR), 104–139 (WIYE…YVLD), 151–186 (QMMV…EEYD), 188–223 (MKDI…HDGN), 229–264 (WVKT…SDYD), and 265–300 (HAEA…FVGS). Residue serine 69 is modified to Phosphoserine. Ca(2+)-binding residues include aspartate 81, aspartate 83, aspartate 85, glutamate 92, aspartate 117, asparagine 119, aspartate 121, and glutamate 128. Asparagine 131 carries N-linked (GlcNAc...) asparagine glycosylation. Aspartate 164 is a binding site for Ca(2+). At lysine 165 the chain carries N6-acetyllysine. Residues aspartate 166, aspartate 168, glutamate 175, aspartate 201, asparagine 203, aspartate 205, glutamate 212, aspartate 242, asparagine 244, aspartate 246, lysine 248, and glutamate 253 each contribute to the Ca(2+) site. Threonine 254 carries the post-translational modification Phosphothreonine. Phosphoserine occurs at positions 261 and 277. The Ca(2+) site is built by aspartate 278, asparagine 280, aspartate 282, lysine 284, and glutamate 289. The short motif at 312 to 315 (HDEF) is the Prevents secretion from ER element.

This sequence belongs to the CREC family. In terms of assembly, interacts with GGCX.

The protein localises to the endoplasmic reticulum membrane. Its subcellular location is the golgi apparatus. It localises to the secreted. It is found in the melanosome. The protein resides in the sarcoplasmic reticulum lumen. Its function is as follows. Involved in regulation of vitamin K-dependent carboxylation of multiple N-terminal glutamate residues. Seems to inhibit gamma-carboxylase GGCX. Binds 7 calcium ions with a low affinity. In Pongo abelii (Sumatran orangutan), this protein is Calumenin (CALU).